Consider the following 430-residue polypeptide: Serine hydroxymethyltransferase (430 aa).

Residues L123 and 127-129 (GHL) each bind (6S)-5,6,7,8-tetrahydrofolate. An N6-(pyridoxal phosphate)lysine modification is found at K232. Residue E248 participates in (6S)-5,6,7,8-tetrahydrofolate binding.

It belongs to the SHMT family. Homodimer. The cofactor is pyridoxal 5'-phosphate.

The protein resides in the cytoplasm. The catalysed reaction is (6R)-5,10-methylene-5,6,7,8-tetrahydrofolate + glycine + H2O = (6S)-5,6,7,8-tetrahydrofolate + L-serine. Its pathway is one-carbon metabolism; tetrahydrofolate interconversion. The protein operates within amino-acid biosynthesis; glycine biosynthesis; glycine from L-serine: step 1/1. In terms of biological role, catalyzes the reversible interconversion of serine and glycine with tetrahydrofolate (THF) serving as the one-carbon carrier. This reaction serves as the major source of one-carbon groups required for the biosynthesis of purines, thymidylate, methionine, and other important biomolecules. Also exhibits THF-independent aldolase activity toward beta-hydroxyamino acids, producing glycine and aldehydes, via a retro-aldol mechanism. The chain is Serine hydroxymethyltransferase from Anaplasma marginale (strain Florida).